An 819-amino-acid polypeptide reads, in one-letter code: Solute carrier organic anion transporter family member 74D (819 aa).

Residues 1–157 (MTKSNGDVEA…GSSAESSSSC (157 aa)) are disordered. Over 1–174 (MTKSNGDVEA…RWARRFASTH (174 aa)) the chain is Cytoplasmic. 3 stretches are compositionally biased toward polar residues: residues 24 to 34 (GHGQLNGNGYH), 43 to 62 (SQAF…NGEV), and 71 to 81 (LYESTPSNNNE). 2 stretches are compositionally biased toward low complexity: residues 91-111 (LKNG…NGHS) and 144-157 (DLNG…SSSC). The helical transmembrane segment at 175-195 (VFMVVFLLAYILQGMYMTYFV) threads the bilayer. At 196-213 (SVITTIEKLFQIKSKTTG) the chain is on the extracellular side. A helical membrane pass occupies residues 214–234 (ILLSASEMGQICTAMLLTYFA). Residues 235-242 (GRGHRPRW) are Cytoplasmic-facing. A helical membrane pass occupies residues 243–263 (IACGMVLFSIAAFSCALPHFI). Residues 264 to 332 (FGEQLMHSSV…LEQASHSKIT (69 aa)) lie on the Extracellular side of the membrane. N-linked (GlcNAc...) asparagine glycosylation is found at Asn284, Asn293, and Asn309. Residues 333–353 (VIVLCIFFGSLLSSGIGQTAV) form a helical membrane-spanning segment. Residues 354-373 (ATLGIPYIDDNVGSKQSPMY) lie on the Cytoplasmic side of the membrane. A helical transmembrane segment spans residues 374–394 (MAVTIGMRILGPASGFIFGSF). Over 395–413 (CTRWYVNFSNPGFDATDPR) the chain is Extracellular. Asn401 is a glycosylation site (N-linked (GlcNAc...) asparagine). The chain crosses the membrane as a helical span at residues 414–434 (WIGAWWLGPVAIGSLMLLASI). The Cytoplasmic segment spans residues 435–488 (AMFSFPKQLRGKQKPPGQTATPAAPVEPEEKPKLKDFPKTVRRQLSNDILMFRT). Positions 444-466 (RGKQKPPGQTATPAAPVEPEEKP) are disordered. A helical membrane pass occupies residues 489–509 (ASCVFHLLPIAGLYTFLPKYL). Over 510–522 (ETQFRLATYDANM) the chain is Extracellular. A helical membrane pass occupies residues 523–543 (IAAFCGILVMGIGIVISGLFI). At 544–553 (LKRKPTARGV) the chain is on the cytoplasmic side. A helical membrane pass occupies residues 554–574 (AAWIAFTALVYSAGMIILMFI). Residues 575 to 667 (GCSMNDFAGY…NGYCDNNCKN (93 aa)) lie on the Extracellular side of the membrane. Residues 593–651 (ALIEPTCSAALNCTCDKENFAPICADGKMYISACHAGCSSSSLRPSDNRTLYSDCACIP) enclose the Kazal-like domain. Intrachain disulfides connect Cys599-Cys630, Cys607-Cys626, and Cys616-Cys649. N-linked (GlcNAc...) asparagine glycosylation occurs at Asn604. Asn640 is a glycosylation site (N-linked (GlcNAc...) asparagine). Residues 668–688 (FIYFILIFAICVFMHSTSEVG) traverse the membrane as a helical segment. Topologically, residues 689–707 (SMLLVMRCTHPKDKAMAMG) are cytoplasmic. The helical transmembrane segment at 708–728 (VIQSAIGLFGNVPCPIIYGAV) threads the bilayer. Topologically, residues 729–756 (VDSACLIWKSVCGKHGACSLYDADTFRQ) are extracellular. Residues 757–777 (YFLGITAGIMFLAFLMDLVVW) form a helical membrane-spanning segment. The Cytoplasmic portion of the chain corresponds to 778–819 (RKAHRIDIAPEDPQEGGPASNGRTLEVSESKQPITPAPDTTV). Residues 787 to 819 (PEDPQEGGPASNGRTLEVSESKQPITPAPDTTV) are disordered. Over residues 807-819 (SKQPITPAPDTTV) the composition is skewed to polar residues.

It belongs to the organo anion transporter (TC 2.A.60) family.

It localises to the cell membrane. Transporter that mediates the cellular uptake of ecdysteroids, including ecdysone, from the hemolymph. The protein is Solute carrier organic anion transporter family member 74D of Drosophila melanogaster (Fruit fly).